The primary structure comprises 463 residues: RuvB-like 2 (463 aa).

Ala-2 carries the N-acetylalanine modification. Lys-9 is covalently cross-linked (Glycyl lysine isopeptide (Lys-Gly) (interchain with G-Cter in SUMO2)). 77-84 provides a ligand contact to ATP; sequence GQPGTGKT. Ser-437 carries the post-translational modification Phosphoserine. Residues Lys-444 and Lys-456 each participate in a glycyl lysine isopeptide (Lys-Gly) (interchain with G-Cter in SUMO2) cross-link.

Belongs to the RuvB family. As to quaternary structure, forms homohexameric rings. Can form a dodecamer with RUVBL1 made of two stacked hexameric rings; however, even though RUVBL1 and RUVBL2 are present in equimolar ratio, the oligomeric status of each hexamer is not known. Oligomerization may regulate binding to nucleic acids and conversely, binding to nucleic acids may affect the dodecameric assembly. Interaction of the complex with DHX34 results in conformational changes of the N-terminus of the RUVBL2 subunits, resulting in loss of nucleotide binding ability and ATP hydrolysis of the complex. Interacts with the transcriptional activation domain of MYC. Interacts with ATF2. Component of the RNA polymerase II holoenzyme complex. May also act to bridge the LEF1/TCF1-CTNNB1 complex and TBP. Component of the NuA4 histone acetyltransferase complex which contains the catalytic subunit KAT5/TIP60 and the subunits EP400, TRRAP/PAF400, BRD8/SMAP, EPC1, DMAP1/DNMAP1, RUVBL1/TIP49, RUVBL2, ING3, actin, ACTL6A/BAF53A, MORF4L1/MRG15, MORF4L2/MRGX, MRGBP, YEATS4/GAS41, VPS72/YL1 and MEAF6. The NuA4 complex interacts with MYC and the adenovirus E1A protein. RUVBL2 interacts with EP400. Component of a NuA4-related complex which contains EP400, TRRAP/PAF400, SRCAP, BRD8/SMAP, EPC1, DMAP1/DNMAP1, RUVBL1/TIP49, RUVBL2, actin, ACTL6A/BAF53A, VPS72 and YEATS4/GAS41. Interacts with NPAT. Component of the chromatin-remodeling INO80 complex; specifically part of a complex module associated with the helicase ATP-binding and the helicase C-terminal domain of INO80. Component of some MLL1/MLL complex, at least composed of the core components KMT2A/MLL1, ASH2L, HCFC1/HCF1, WDR5 and RBBP5, as well as the facultative components BACC1, CHD8, E2F6, HSP70, INO80C, KANSL1, LAS1L, MAX, MCRS1, MGA, MYST1/MOF, PELP1, PHF20, PRP31, RING2, RUVB1/TIP49A, RUVB2/TIP49B, SENP3, TAF1, TAF4, TAF6, TAF7, TAF9 and TEX10. Interacts with IGHMBP2. Interacts with TELO2. Interacts with HINT1. Component of a SWR1-like complex. Component of the R2TP complex composed at least of RUVBL1, RUVBL2, RPAP3 and PIHD1. Component of the PAQosome complex which is responsible for the biogenesis of several protein complexes and which consists of R2TP complex members RUVBL1, RUVBL2, RPAP3 and PIH1D1, URI complex members PFDN2, PFDN6, PDRG1, UXT and URI1 as well as ASDURF, POLR2E and DNAAF10/WDR92. Interacts with ITFG1. Interacts with ZMYND10. Interacts with WAC; WAC positively regulates MTOR activity by promoting the assembly of the TTT complex composed of TELO2, TTI1 and TTI2 and the RUVBL complex composed of RUVBL1 and RUVBL2 into the TTT-RUVBL complex which leads to the dimerization of the mTORC1 complex and its subsequent activation. Forms a complex with APPL1 and APPL2. Interacts with ZNHIT2 (via HIT-type zinc finger) in the presence of ATP or ADP; shows a stronger interaction in the presence of ADP. The RUVBL1/RUVBL2 complex interacts with ZNHIT1 (via HIT-type zinc finger), ZNHIT3 (via HIT-type zinc finger), ZNHIT6 (via HIT-type zinc finger) and DDX59/ZNHIT5 (via HIT-type zinc finger) in the presence of ADP. Interacts with NOPCHAP1; the interaction is direct and disrupted upon ATP binding. Interacts with SMG1.

It is found in the nucleus matrix. Its subcellular location is the nucleus. It localises to the nucleoplasm. The protein localises to the cytoplasm. The protein resides in the membrane. It is found in the dynein axonemal particle. The enzyme catalyses ATP + H2O = ADP + phosphate + H(+). Possesses single-stranded DNA-stimulated ATPase and ATP-dependent DNA helicase (5' to 3') activity; hexamerization is thought to be critical for ATP hydrolysis and adjacent subunits in the ring-like structure contribute to the ATPase activity. Component of the NuA4 histone acetyltransferase complex which is involved in transcriptional activation of select genes principally by acetylation of nucleosomal histones H4 and H2A. This modification may both alter nucleosome-DNA interactions and promote interaction of the modified histones with other proteins which positively regulate transcription. This complex may be required for the activation of transcriptional programs associated with oncogene and proto-oncogene mediated growth induction, tumor suppressor mediated growth arrest and replicative senescence, apoptosis, and DNA repair. The NuA4 complex ATPase and helicase activities seem to be, at least in part, contributed by the association of RUVBL1 and RUVBL2 with EP400. NuA4 may also play a direct role in DNA repair when recruited to sites of DNA damage. Component of a SWR1-like complex that specifically mediates the removal of histone H2A.Z/H2AZ1 from the nucleosome. Proposed core component of the chromatin remodeling INO80 complex which exhibits DNA- and nucleosome-activated ATPase activity and catalyzes ATP-dependent nucleosome sliding. Plays an essential role in oncogenic transformation by MYC and also modulates transcriptional activation by the LEF1/TCF1-CTNNB1 complex. May also inhibit the transcriptional activity of ATF2. Involved in the endoplasmic reticulum (ER)-associated degradation (ERAD) pathway where it negatively regulates expression of ER stress response genes. May play a role in regulating the composition of the U5 snRNP complex. In Bos taurus (Bovine), this protein is RuvB-like 2 (RUVBL2).